The chain runs to 357 residues: Protein RecA (357 aa).

67-74 (GPESSGKT) is an ATP binding site.

It belongs to the RecA family.

Its subcellular location is the cytoplasm. Its function is as follows. Can catalyze the hydrolysis of ATP in the presence of single-stranded DNA, the ATP-dependent uptake of single-stranded DNA by duplex DNA, and the ATP-dependent hybridization of homologous single-stranded DNAs. It interacts with LexA causing its activation and leading to its autocatalytic cleavage. This chain is Protein RecA, found in Leifsonia xyli subsp. xyli (strain CTCB07).